Here is a 110-residue protein sequence, read N- to C-terminus: Insulin (110 aa).

An N-terminal signal peptide occupies residues 1–24; the sequence is MAPWTRLLPLLALLSLWIPAPTRA. Disulfide bonds link Cys-31/Cys-96, Cys-43/Cys-109, and Cys-95/Cys-100. Positions 57-87 are cleaved as a propeptide — c peptide; sequence EAEDLQGKDAELGEAPGAGGLQPSALEAPLQ. The interval 60 to 80 is disordered; it reads DLQGKDAELGEAPGAGGLQPS.

This sequence belongs to the insulin family. Heterodimer of a B chain and an A chain linked by two disulfide bonds.

It localises to the secreted. Functionally, insulin decreases blood glucose concentration. It increases cell permeability to monosaccharides, amino acids and fatty acids. It accelerates glycolysis, the pentose phosphate cycle, and glycogen synthesis in liver. The polypeptide is Insulin (INS) (Felis catus (Cat)).